A 617-amino-acid chain; its full sequence is Prothrombin (617 aa).

Residues 1–24 (MLHVRGLGLPGCLALAALASLVHS) form the signal peptide. The propeptide occupies 25–43 (QHVFLAPQQALSLLQRVRR). A Gla domain is found at 44-90 (ANSGFLEELRKGNLERECVEEQCSYEEAFEALESPQDTDVFWAKYTV). 10 positions are modified to 4-carboxyglutamate: glutamate 50, glutamate 51, glutamate 58, glutamate 60, glutamate 63, glutamate 64, glutamate 69, glutamate 70, glutamate 73, and glutamate 76. Residues cysteine 61 and cysteine 66 are joined by a disulfide bond. 10 cysteine pairs are disulfide-bonded: cysteine 91–cysteine 104, cysteine 109–cysteine 187, cysteine 130–cysteine 170, cysteine 158–cysteine 182, cysteine 215–cysteine 292, cysteine 236–cysteine 276, cysteine 264–cysteine 287, cysteine 332–cysteine 478, cysteine 387–cysteine 403, and cysteine 532–cysteine 546. Kringle domains lie at 109 to 187 (CAMD…IPVC) and 215 to 292 (CLLE…LNYC). N-linked (GlcNAc...) asparagine glycans are attached at residues asparagine 120 and asparagine 144. The Peptidase S1 domain occupies 360-614 (IVEGWDAEKG…LKRWMQKVID (255 aa)). Histidine 402 (charge relay system) is an active-site residue. N-linked (GlcNAc...) asparagine glycosylation is present at asparagine 412. The active-site Charge relay system is aspartate 458. The tract at residues 547–569 (AGFKVNDTKRGDACEGDSGGPFV) is high affinity receptor-binding region which is also known as the TP508 peptide. N-linked (GlcNAc...) asparagine glycosylation occurs at asparagine 552. Cysteine 560 and cysteine 590 are oxidised to a cystine. Serine 564 functions as the Charge relay system in the catalytic mechanism.

Belongs to the peptidase S1 family. In terms of assembly, heterodimer (named alpha-thrombin) of a light and a heavy chain; disulfide-linked. Forms a heterodimer with SERPINA5. In plasma, interacts (via N-terminus) with alpha-1-microglobulin; this interaction does not prevent the activation of prothrombin to thrombin. In terms of processing, the gamma-carboxyglutamyl residues, which bind calcium ions, result from the carboxylation of glutamyl residues by a microsomal enzyme, the vitamin K-dependent carboxylase. The modified residues are necessary for the calcium-dependent interaction with a negatively charged phospholipid surface, which is essential for the conversion of prothrombin to thrombin. Post-translationally, in the penultimate step of the coagulation cascade, prothrombin is converted to thrombin by the prothrombinase complex composed of factor Xa (F10), cofactor Va (F5), and phospholipids. This activation requires factor Xa-catalyzed sequential cleavage at 2 sites, Arg-310 and Arg-359, along 2 possible pathways. In the first pathway, the first cleavage occurs at Arg-310, leading to the formation of the inactive intermediate prethrombin-2. This pathway preferentially occurs on platelets and in the absence of cofactor Va. In the second pathway, the first cleavage occurs at Arg-359, which separates protease domain into 2 chains that remain connected through a disulfide bond and generates the active intermediate meizothrombin. The presence of cofactor Va directs activation along the meizothrombin pathway and greatly accelerates the rate of cleavage at Arg-359, but has a smaller effect on the cleavage of meizothrombin at Arg-310. Meizothrombin accumulates as an intermediate when prothrombinase is assembled on the membrane of red blood cells.

It catalyses the reaction Selective cleavage of Arg-|-Gly bonds in fibrinogen to form fibrin and release fibrinopeptides A and B.. Its activity is regulated as follows. Activity is promoted in the presence of negatively charged surfaces, such as polyphosphate and dextran sulfate. Inhibited by SERPINA5. Functionally, thrombin, which cleaves bonds after Arg and Lys, converts fibrinogen to fibrin and activates factors V, VII, VIII, XIII, and, in complex with thrombomodulin, protein C. Functions in blood homeostasis, inflammation and wound healing. Activates coagulation factor XI (F11); activation is promoted by the contact with negatively charged surfaces. Triggers the production of pro-inflammatory cytokines, such as MCP-1/CCL2 and IL8/CXCL8, in endothelial cells. The protein is Prothrombin (F2) of Rattus norvegicus (Rat).